The following is a 289-amino-acid chain: ATP synthase gamma chain (289 aa).

Belongs to the ATPase gamma chain family. In terms of assembly, F-type ATPases have 2 components, CF(1) - the catalytic core - and CF(0) - the membrane proton channel. CF(1) has five subunits: alpha(3), beta(3), gamma(1), delta(1), epsilon(1). CF(0) has three main subunits: a, b and c.

It localises to the cell inner membrane. In terms of biological role, produces ATP from ADP in the presence of a proton gradient across the membrane. The gamma chain is believed to be important in regulating ATPase activity and the flow of protons through the CF(0) complex. The protein is ATP synthase gamma chain of Pasteurella multocida (strain Pm70).